The following is a 498-amino-acid chain: Pup deamidase/depupylase (498 aa).

ATP is bound at residue 6–10; the sequence is GTEVE. Residues Glu8 and Tyr93 each coordinate Mg(2+). The active-site Proton acceptor is the Asp95. Position 100 (Glu100) interacts with Mg(2+). 102 to 103 lines the ATP pocket; that stretch reads SA. Residue His156 participates in Mg(2+) binding. 2 residues coordinate ATP: Asn158 and Arg240. His242 lines the Mg(2+) pocket.

It belongs to the Pup ligase/Pup deamidase family. Pup deamidase subfamily. It depends on ATP as a cofactor.

The enzyme catalyses [prokaryotic ubiquitin-like protein]-C-terminal-L-glutamine + H2O = [prokaryotic ubiquitin-like protein]-C-terminal-L-glutamate + NH4(+). It participates in protein degradation; proteasomal Pup-dependent pathway. In terms of biological role, specifically catalyzes the deamidation of the C-terminal glutamine of the prokaryotic ubiquitin-like protein Pup to glutamate, thereby rendering Pup competent for conjugation. Probably also displays depupylase (DPUP) activity, removing conjugated Pup from target proteins; thus may be involved in the recycling of Pup and may function similarly to deubiquitinases (DUBs) in eukaryotes to prevent or promote proteasomal degradation of certain proteins. This is Pup deamidase/depupylase (dop) from Mycolicibacterium smegmatis (strain ATCC 700084 / mc(2)155) (Mycobacterium smegmatis).